A 494-amino-acid polypeptide reads, in one-letter code: Ketol-acid reductoisomerase (NADP(+)) (494 aa).

A KARI N-terminal Rossmann domain is found at 14–208; it reads LDQLGRCRFM…GGHRAGCLES (195 aa). NADP(+) contacts are provided by residues 45 to 48, Arg-68, Arg-76, Ser-78, and 108 to 110; these read CGAQ and DKQ. His-132 is an active-site residue. Residue Gly-158 coordinates NADP(+). KARI C-terminal knotted domains are found at residues 209–344 and 345–487; these read SFVA…NYPA and SDVE…MSDM. Mg(2+)-binding residues include Asp-217, Glu-221, Glu-389, and Glu-393. Substrate is bound at residue Ser-414.

This sequence belongs to the ketol-acid reductoisomerase family. Requires Mg(2+) as cofactor.

The catalysed reaction is (2R)-2,3-dihydroxy-3-methylbutanoate + NADP(+) = (2S)-2-acetolactate + NADPH + H(+). It carries out the reaction (2R,3R)-2,3-dihydroxy-3-methylpentanoate + NADP(+) = (S)-2-ethyl-2-hydroxy-3-oxobutanoate + NADPH + H(+). It functions in the pathway amino-acid biosynthesis; L-isoleucine biosynthesis; L-isoleucine from 2-oxobutanoate: step 2/4. Its pathway is amino-acid biosynthesis; L-valine biosynthesis; L-valine from pyruvate: step 2/4. Its function is as follows. Involved in the biosynthesis of branched-chain amino acids (BCAA). Catalyzes an alkyl-migration followed by a ketol-acid reduction of (S)-2-acetolactate (S2AL) to yield (R)-2,3-dihydroxy-isovalerate. In the isomerase reaction, S2AL is rearranged via a Mg-dependent methyl migration to produce 3-hydroxy-3-methyl-2-ketobutyrate (HMKB). In the reductase reaction, this 2-ketoacid undergoes a metal-dependent reduction by NADPH to yield (R)-2,3-dihydroxy-isovalerate. In Vibrio atlanticus (strain LGP32) (Vibrio splendidus (strain Mel32)), this protein is Ketol-acid reductoisomerase (NADP(+)).